Here is a 383-residue protein sequence, read N- to C-terminus: Na(+)/H(+) antiporter NhaA (383 aa).

11 helical membrane passes run 14 to 34 (AGGI…NSPL), 47 to 67 (FGMS…FLLI), 87 to 107 (IFPA…YVAF), 117 to 137 (GWAI…ALLG), 146 to 166 (VFLL…IALF), 171 to 191 (LSTM…MLNA), 205 to 225 (AILW…GVVI), 252 to 272 (VAFG…LEGV), 280 to 300 (MLPL…IFTF), 321 to 341 (IFAV…ISSL), and 356 to 376 (LGIL…LHFS).

It belongs to the NhaA Na(+)/H(+) (TC 2.A.33) antiporter family.

It localises to the cell inner membrane. It catalyses the reaction Na(+)(in) + 2 H(+)(out) = Na(+)(out) + 2 H(+)(in). In terms of biological role, na(+)/H(+) antiporter that extrudes sodium in exchange for external protons. The chain is Na(+)/H(+) antiporter NhaA from Vibrio alginolyticus.